We begin with the raw amino-acid sequence, 84 residues long: Envelope small membrane protein (84 aa).

Topologically, residues 1 to 18 (MFMADAYLADTVWYVGQI) are virion surface. The chain crosses the membrane as a helical span at residues 19–39 (IFIVAICLLVIIVVVAFLATF). At 40–80 (KLCIQLCGMCNTLVLSPSIYVFNRGRQFYEFYNDVKPPVLD) the chain is on the intravirion side.

Belongs to the betacoronaviruses E protein family. As to quaternary structure, homopentamer. Interacts with membrane protein M in the budding compartment of the host cell, which is located between endoplasmic reticulum and the Golgi complex. Interacts with Nucleoprotein.

The protein localises to the host Golgi apparatus membrane. In terms of biological role, plays a central role in virus morphogenesis and assembly. Acts as a viroporin and self-assembles in host membranes forming pentameric protein-lipid pores that allow ion transport. Also plays a role in the induction of apoptosis. The chain is Envelope small membrane protein from Porcine hemagglutinating encephalomyelitis virus (strain 67N) (HEV-67N).